The chain runs to 642 residues: Kinesin-like protein KIF12 (642 aa).

Positions 1–13 are enriched in basic and acidic residues; the sequence is MEERGSPDGDPAR. The interval 1-25 is disordered; it reads MEERGSPDGDPARNLEQGPEGSETP. S6 is modified (phosphoserine). In terms of domain architecture, Kinesin motor spans 25–360; sequence PIQVVLRVRP…LRYASRAQRI (336 aa). ATP is bound at residue 104 to 111; it reads GQTGSGKT. S369 carries the post-translational modification Phosphoserine. The stretch at 376 to 465 forms a coiled coil; that stretch reads QQVENELLRL…QVHDLERRLL (90 aa). Disordered regions lie at residues 531–561 and 579–642; these read GHIS…SQSD and PSAP…LSSC. The span at 538–548 shows a compositional bias: pro residues; sequence WPPPWAPPPSP. The segment covering 610-642 has biased composition (polar residues); it reads TLTQQINSSLHLSQRQPQPSEDTQSPGQGLSSC. The residue at position 634 (S634) is a Phosphoserine.

It belongs to the TRAFAC class myosin-kinesin ATPase superfamily. Kinesin family. Expressed in the liver.

It localises to the cytoplasm. The protein localises to the cytoskeleton. In Mus musculus (Mouse), this protein is Kinesin-like protein KIF12 (Kif12).